The following is an 830-amino-acid chain: MSGAYRGRGFGRGRFQNWKRGRGGGNFSGRWRDRTDLSKAAGNHASEQASQPLLQQSTLDQFIPYKGWKLYFSEVYSNNSPLTEKIQAFEKFFTRHIDLYDKDEIERKGSILVDFKELTKDNEITNLIPDIENALRDAPEKTLACMGLAIHQVLTKDLERHAAELQAQEGLCNGGGTMVNVPHIYARVYNYEPLTHLKNIRATCYGKYISIRGTVVRVSNIKPLCTKMAFQCAACGEIQSFPLPDGKYNLPTKCPVPACRGRSFTPLRSSPLTVTMDWQLIKIQELMSDAQREAGRIPRTIECELVHDLVDSCVPGDTVTVTGIVKVSNSEEGSRSKNDKCMFLLYIEANSVSNSKGQKAQTAEDGCKHGTLMEFSLKDLYAIQEIQAEENLLKLIVNSLCPVIFGHELVKAGLMLALFGGSQKYADDKNRIPIRGDPHVLIVGDPGLGKSQMLQAACNVAPRGVYVCGNTATSSGLTVTLSKDSSSGDFALEAGALVLGDQGICGIDEFDKMGNQHQALLEAMEQQSISLAKAGVVCSLPARTSIIAAANPVGGHYNKARTVSENLKMGSALLSRFDLVFILLDTPNEQHDHLLSEHVIAIRAGKQRAVSSATVSRVLSQDSNTSVLEVVSEKPLSERLKVAPGEKTDPIPHQLLRKYIGYARQYVHPRLSTEAAQALQDFYLELRKQSQRVGSSPITTRQLESLIRLTEARARLELREEATKEDAEDIIEIMKHSMLGTYSDEFGNLDFERSQHGSGMSNRSTAKRFISALNSIAERTYNNIFQFHQLRQIAKELNIQVADFENFIGSLNDQGYLLKKGPKIYQLQTM.

An MCM domain is found at 392 to 599 (LLKLIVNSLC…QHDHLLSEHV (208 aa)). 444–451 (GDPGLGKS) lines the ATP pocket. S620 is subject to Phosphoserine.

Belongs to the MCM family. In terms of assembly, component of the MCM8-MCM9 complex, which forms a hexamer composed of MCM8 and MCM9. Interacts with the DNA mismatch repair (MMR) complex composed at least of MSH2, MSH3, MSH6, PMS1 and MLH1. Interacts with RAD51; the interaction recruits RAD51 to DNA damage sites. Interacts with the MRN complex composed of MRE11, RAD50 and NBN/NBS1. Interacts with CDC6 and ORC2. Interacts with HROB; the interaction recruits the MCM8-MCM9 complex to DNA damage sites.

The protein resides in the nucleus. Its subcellular location is the chromosome. It catalyses the reaction ATP + H2O = ADP + phosphate + H(+). In terms of biological role, component of the MCM8-MCM9 complex, a complex involved in the repair of double-stranded DNA breaks (DBSs) and DNA interstrand cross-links (ICLs) by homologous recombination (HR). Required for DNA resection by the MRE11-RAD50-NBN/NBS1 (MRN) complex by recruiting the MRN complex to the repair site and by promoting the complex nuclease activity. Probably by regulating the localization of the MNR complex, indirectly regulates the recruitment of downstream effector RAD51 to DNA damage sites including DBSs and ICLs. The MCM8-MCM9 complex is dispensable for DNA replication and S phase progression. However, may play a non-essential for DNA replication: may be involved in the activation of the prereplicative complex (pre-RC) during G(1) phase by recruiting CDC6 to the origin recognition complex (ORC). Probably by regulating HR, plays a key role during gametogenesis. Stabilizes MCM9 protein. In Rattus norvegicus (Rat), this protein is DNA helicase MCM8 (Mcm8).